A 544-amino-acid polypeptide reads, in one-letter code: GMP synthase [glutamine-hydrolyzing] (544 aa).

The 199-residue stretch at 12–210 folds into the Glutamine amidotransferase type-1 domain; that stretch reads TILILDFGSQ…VKNVCGVRDG (199 aa). Residue Cys88 is the Nucleophile of the active site. Catalysis depends on residues His184 and Glu186. The region spanning 211-419 is the GMPS ATP-PPase domain; sequence WSMESFIPKE…LNIPEHLVGR (209 aa). Residue 239-245 participates in ATP binding; sequence SGGVDST. Positions 312, 481, 536, and 542 each coordinate XMP.

As to quaternary structure, homodimer. Also forms a small population of homotetramers. Mg(2+) serves as cofactor.

It is found in the cytoplasm. The protein localises to the cytosol. It catalyses the reaction XMP + L-glutamine + ATP + H2O = GMP + L-glutamate + AMP + diphosphate + 2 H(+). It participates in purine metabolism; GMP biosynthesis; GMP from XMP (L-Gln route): step 1/1. With respect to regulation, the enzyme is inhibited by ECC1385; although this compound fails to inhibit growth of the organism. Catalyzes the conversion of xanthine monophosphate (XMP) to GMP in the presence of glutamine and ATP through an adenyl-XMP intermediate. In Cryptococcus neoformans var. grubii serotype A (strain H99 / ATCC 208821 / CBS 10515 / FGSC 9487) (Filobasidiella neoformans var. grubii), this protein is GMP synthase [glutamine-hydrolyzing].